Reading from the N-terminus, the 218-residue chain is Ependymin (218 aa).

The first 20 residues, M1–G20, serve as a signal peptide directing secretion. N-linked (GlcNAc...) asparagine glycosylation is found at N74 and N97.

Belongs to the ependymin family. Forms disulfide-linked dimers. Post-translationally, binds calcium through the terminal sialic acids.

It is found in the secreted. Functionally, may play a role in neural plasticity. May be involved during axon regeneration. This is Ependymin (epd) from Devario aequipinnatus (Giant danio).